The following is an 825-amino-acid chain: Thioredoxin domain-containing protein 16 (825 aa).

An N-terminal signal peptide occupies residues 1 to 27 (MFSGFNVFRVGISFVIMCIFYMPTVNS). In terms of domain architecture, Thioredoxin spans 392 to 495 (LTVELTEETF…EDLLKFIQLN (104 aa)). The cysteines at positions 449 and 456 are disulfide-linked. N-linked (GlcNAc...) asparagine glycosylation is present at N460. The tract at residues 762–787 (RKVPKCMKETDVQENDKEQHEDKSAV) is disordered. The span at 767-787 (CMKETDVQENDKEQHEDKSAV) shows a compositional bias: basic and acidic residues. The Mediates endoplasmic reticulum retention signature appears at 816 to 819 (DKEL).

Interacts with FOXRED2. Glycosylated.

Its subcellular location is the secreted. The protein localises to the endoplasmic reticulum lumen. This Homo sapiens (Human) protein is Thioredoxin domain-containing protein 16.